Consider the following 438-residue polypeptide: UDP-N-acetylmuramoylalanine--D-glutamate ligase (438 aa).

112 to 118 (GSNGKST) contributes to the ATP binding site.

The protein belongs to the MurCDEF family.

The protein localises to the cytoplasm. It carries out the reaction UDP-N-acetyl-alpha-D-muramoyl-L-alanine + D-glutamate + ATP = UDP-N-acetyl-alpha-D-muramoyl-L-alanyl-D-glutamate + ADP + phosphate + H(+). Its pathway is cell wall biogenesis; peptidoglycan biosynthesis. Functionally, cell wall formation. Catalyzes the addition of glutamate to the nucleotide precursor UDP-N-acetylmuramoyl-L-alanine (UMA). The polypeptide is UDP-N-acetylmuramoylalanine--D-glutamate ligase (Salmonella paratyphi A (strain ATCC 9150 / SARB42)).